We begin with the raw amino-acid sequence, 388 residues long: Chorismate synthase (388 aa).

R39 and R45 together coordinate NADP(+). FMN-binding positions include 130-132, 251-252, G296, 311-315, and R337; these read RSS, NA, and KPIPT.

The protein belongs to the chorismate synthase family. As to quaternary structure, homotetramer. Requires FMNH2 as cofactor.

It catalyses the reaction 5-O-(1-carboxyvinyl)-3-phosphoshikimate = chorismate + phosphate. Its pathway is metabolic intermediate biosynthesis; chorismate biosynthesis; chorismate from D-erythrose 4-phosphate and phosphoenolpyruvate: step 7/7. Its function is as follows. Catalyzes the anti-1,4-elimination of the C-3 phosphate and the C-6 proR hydrogen from 5-enolpyruvylshikimate-3-phosphate (EPSP) to yield chorismate, which is the branch point compound that serves as the starting substrate for the three terminal pathways of aromatic amino acid biosynthesis. This reaction introduces a second double bond into the aromatic ring system. The chain is Chorismate synthase from Streptococcus pneumoniae serotype 2 (strain D39 / NCTC 7466).